A 361-amino-acid chain; its full sequence is Anhydro-N-acetylmuramic acid kinase (361 aa).

10-17 (GTSLDGVD) serves as a coordination point for ATP.

Belongs to the anhydro-N-acetylmuramic acid kinase family.

The enzyme catalyses 1,6-anhydro-N-acetyl-beta-muramate + ATP + H2O = N-acetyl-D-muramate 6-phosphate + ADP + H(+). The protein operates within amino-sugar metabolism; 1,6-anhydro-N-acetylmuramate degradation. It functions in the pathway cell wall biogenesis; peptidoglycan recycling. Its function is as follows. Catalyzes the specific phosphorylation of 1,6-anhydro-N-acetylmuramic acid (anhMurNAc) with the simultaneous cleavage of the 1,6-anhydro ring, generating MurNAc-6-P. Is required for the utilization of anhMurNAc either imported from the medium or derived from its own cell wall murein, and thus plays a role in cell wall recycling. The sequence is that of Anhydro-N-acetylmuramic acid kinase from Gluconobacter oxydans (strain 621H) (Gluconobacter suboxydans).